The following is a 107-amino-acid chain: MMKGGIAGLMKQAQQMQENMKKMQDQLASVEVEGQSGAGMVKVLMTCKYDVRRVTIDDSVMDDKEMLEDLLAAAVNDAVRRVETTTQEKMAGFTSGLNLPPGMKLPF.

The protein belongs to the YbaB/EbfC family. As to quaternary structure, homodimer.

Its subcellular location is the cytoplasm. It localises to the nucleoid. In terms of biological role, binds to DNA and alters its conformation. May be involved in regulation of gene expression, nucleoid organization and DNA protection. This chain is Nucleoid-associated protein AZOSEA06390, found in Aromatoleum aromaticum (strain DSM 19018 / LMG 30748 / EbN1) (Azoarcus sp. (strain EbN1)).